The sequence spans 203 residues: MARKKVQRKLDGWKSKEWYNIEAPVYLNRAIVGNTMAGDPSLLVGRNVETTVGELTNDMTKNNTKVILRINNVVGDIATTDLMGHELTTDYIRSIVKRQTSRIDANVDVKTKDGYVIRVKPTCFTIKRARSSQMQAIREMMVEIVKKRAAESDFETFMQEAILGRLSAAIYRQAKFIYPLRRVEIRKTEVETIPAAAPAPAAA.

This sequence belongs to the eukaryotic ribosomal protein eS1 family.

The polypeptide is Small ribosomal subunit protein eS1 (Methanosarcina acetivorans (strain ATCC 35395 / DSM 2834 / JCM 12185 / C2A)).